A 122-amino-acid chain; its full sequence is Large ribosomal subunit protein uL14 (122 aa).

This sequence belongs to the universal ribosomal protein uL14 family. In terms of assembly, part of the 50S ribosomal subunit. Forms a cluster with proteins L3 and L19. In the 70S ribosome, L14 and L19 interact and together make contacts with the 16S rRNA in bridges B5 and B8.

In terms of biological role, binds to 23S rRNA. Forms part of two intersubunit bridges in the 70S ribosome. The sequence is that of Large ribosomal subunit protein uL14 from Pediococcus pentosaceus (strain ATCC 25745 / CCUG 21536 / LMG 10740 / 183-1w).